Here is a 187-residue protein sequence, read N- to C-terminus: UPF0301 protein Noc_0368 (187 aa).

It belongs to the UPF0301 (AlgH) family.

The chain is UPF0301 protein Noc_0368 from Nitrosococcus oceani (strain ATCC 19707 / BCRC 17464 / JCM 30415 / NCIMB 11848 / C-107).